A 169-amino-acid polypeptide reads, in one-letter code: Large ribosomal subunit protein uL15 (169 aa).

The tract at residues G20–L56 is disordered. A compositionally biased stretch (gly residues) spans R21–V35.

This sequence belongs to the universal ribosomal protein uL15 family. Part of the 50S ribosomal subunit.

Its function is as follows. Binds to the 23S rRNA. The sequence is that of Large ribosomal subunit protein uL15 from Methylorubrum extorquens (strain CM4 / NCIMB 13688) (Methylobacterium extorquens).